We begin with the raw amino-acid sequence, 1440 residues long: Pentatricopeptide repeat-containing protein At3g18110, chloroplastic (1440 aa).

The transit peptide at 1 to 44 (MAVSAGALAFPALSVRATLNPEIKDEQANISSTTSSSQKFTYSR) directs the protein to the chloroplast. Polar residues predominate over residues 63-72 (TPSQTLSSPV). The interval 63–84 (TPSQTLSSPVSPIAGTPDSGDV) is disordered. PPR repeat units lie at residues 224–258 (RVQVYNAMMGVYSRSGKFSKAQELVDAMRQRGCVP), 259–295 (DLISFNTLINARLKSGGLTPNLAVELLDMVRNSGLRP), 296–330 (DAITYNTLLSACSRDSNLDGAVKVFEDMEAHRCQP), 331–365 (DLWTYNAMISVYGRCGLAAEAERLFMELELKGFFP), 366–400 (DAVTYNSLLYAFARERNTEKVKEVYQQMQKMGFGK), 401–431 (DEMTYNTIIHMYGKQGQLDLALQLYKDMKGL), 437–471 (DAITYTVLIDSLGKANRTVEAAALMSEMLDVGIKP), 472–506 (TLQTYSALICGYAKAGKREEAEDTFSCMLRSGTKP), 507–541 (DNLAYSVMLDVLLRGNETRKAWGLYRDMISDGHTP), 542–572 (SYTLYELMILGLMKENRSDDIQKTIRDMEEL), 608–638 (ENDTLLSILGSYSSSGRHSEAFELLEFLKEH), 643–678 (KRLITEALIVLHCKVNNLSAALDEYFADPCVHGWCF), 680–714 (SSTMYETLLHCCVANEHYAEASQVFSDLRLSGCEA), 715–749 (SESVCKSMVVVYCKLGFPETAHQVVNQAETKGFHF), 751–785 (CSPMYTDIIEAYGKQKLWQKAESVVGNLRQSGRTP), 786–820 (DLKTWNSLMSAYAQCGCYERARAIFNTMMRDGPSP), 821–855 (TVESINILLHALCVDGRLEELYVVVEELQDMGFKI), 856–890 (SKSSILLMLDAFARAGNIFEVKKIYSSMKAAGYLP), 891–925 (TIRLYRMMIELLCKGKRVRDAEIMVSEMEEANFKV), 926–960 (ELAIWNSMLKMYTAIEDYKKTVQVYQRIKETGLEP), 961–995 (DETTYNTLIIMYCRDRRPEEGYLLMQQMRNLGLDP), 996–1030 (KLDTYKSLISAFGKQKCLEQAEQLFEELLSKGLKL), 1031–1065 (DRSFYHTMMKISRDSGSDSKAEKLLQMMKNAGIEP), 1066–1100 (TLATMHLLMVSYSSSGNPQEAEKVLSNLKDTEVEL), and 1101–1135 (TTLPYSSVIDAYLRSKDYNSGIERLLEMKKEGLEP). The tract at residues 1419–1440 (KKKKMGNETNGINTRRKFVRSK) is disordered.

This sequence belongs to the PPR family. P subfamily.

The protein localises to the plastid. The protein resides in the chloroplast. Its function is as follows. May play a role in embryogenesis. The protein is Pentatricopeptide repeat-containing protein At3g18110, chloroplastic (EMB1270) of Arabidopsis thaliana (Mouse-ear cress).